The sequence spans 162 residues: Lipoprotein signal peptidase (162 aa).

Helical transmembrane passes span 12–32, 70–90, and 102–122; these read WLWLVVVVLIIDLGSKYLILQ, WFFAGIAIGICVILMVMMYRS, and ALIIGGALGNLFDRLWHGFVV. Active-site residues include Asp123 and Asp141. Residues 137 to 157 form a helical membrane-spanning segment; that stretch reads FNLADSAICIGAALIVLEGFL.

Belongs to the peptidase A8 family.

The protein localises to the cell inner membrane. The enzyme catalyses Release of signal peptides from bacterial membrane prolipoproteins. Hydrolyzes -Xaa-Yaa-Zaa-|-(S,diacylglyceryl)Cys-, in which Xaa is hydrophobic (preferably Leu), and Yaa (Ala or Ser) and Zaa (Gly or Ala) have small, neutral side chains.. It participates in protein modification; lipoprotein biosynthesis (signal peptide cleavage). Its function is as follows. This protein specifically catalyzes the removal of signal peptides from prolipoproteins. The protein is Lipoprotein signal peptidase of Citrobacter koseri (strain ATCC BAA-895 / CDC 4225-83 / SGSC4696).